An 864-amino-acid chain; its full sequence is DNA double-strand break repair Rad50 ATPase (864 aa).

ATP-binding positions include 32 to 38 and Gln-131; that span reads NGAGKSS. Coiled coils occupy residues 176-319 and 376-413; these read RELD…EKAI and DIDK…EKNE. The region spanning 380–478 is the Zinc-hook domain; sequence VNSLEQKVEE…ELNKIEREYR (99 aa). Zn(2+)-binding residues include Cys-426 and Cys-429. A coiled-coil region spans residues 440–697; the sequence is KIIKEAKSYI…DREKIINAIN (258 aa).

Belongs to the SMC family. RAD50 subfamily. Homodimer. Forms a heterotetramer composed of two Mre11 subunits and two Rad50 subunits. It depends on Zn(2+) as a cofactor.

Functionally, part of the Rad50/Mre11 complex, which is involved in the early steps of DNA double-strand break (DSB) repair. The complex may facilitate opening of the processed DNA ends to aid in the recruitment of HerA and NurA. Rad50 controls the balance between DNA end bridging and DNA resection via ATP-dependent structural rearrangements of the Rad50/Mre11 complex. This chain is DNA double-strand break repair Rad50 ATPase, found in Saccharolobus solfataricus (strain ATCC 35092 / DSM 1617 / JCM 11322 / P2) (Sulfolobus solfataricus).